A 283-amino-acid chain; its full sequence is Gap junction alpha-6 protein (283 aa).

The Cytoplasmic portion of the chain corresponds to 1-23; it reads MSDWSALHQLLEKVQPYSTAGGK. Residues 24–41 form a helical membrane-spanning segment; the sequence is VWIKVLFIFRILLLGTAI. The Extracellular segment spans residues 42–76; sequence ESAWSDEQFEFHCNTQQPGCENVCYDHAFPISHVR. A helical transmembrane segment spans residues 77–99; that stretch reads LWVLQVIFVSVPILLYLAHVYYV. Over 100–150 the chain is Cytoplasmic; sequence VRQNKKLNKQEEELEAAHFNEASVERHLETIAGEQFKCGSEEQSKVKMRGR. A helical transmembrane segment spans residues 151–173; that stretch reads LLLTYMASIFFKSVFEMAFLLIQ. Residues 174–208 lie on the Extracellular side of the membrane; sequence WYIYGFTLSALYICEQSPCPRRVDCFLSRPTEKTI. The chain crosses the membrane as a helical span at residues 209 to 231; that stretch reads FILFMFVVSVVSFVLDIIELFYV. The Cytoplasmic segment spans residues 232–283; it reads LFKAIKNRMRKAEDEVYCDELPCPSHVSSSTVLTTIDSSEQAVPVELSSVCI.

It belongs to the connexin family. Alpha-type (group II) subfamily. As to quaternary structure, a connexon is composed of a hexamer of connexins.

The protein resides in the cell membrane. Its subcellular location is the cell junction. It localises to the gap junction. Its function is as follows. One gap junction consists of a cluster of closely packed pairs of transmembrane channels, the connexons, through which materials of low MW diffuse from one cell to a neighboring cell. The polypeptide is Gap junction alpha-6 protein (Gja6) (Mus musculus (Mouse)).